Here is a 433-residue protein sequence, read N- to C-terminus: Glutamate-1-semialdehyde 2,1-aminomutase (433 aa).

Position 272 is an N6-(pyridoxal phosphate)lysine (Lys-272).

Belongs to the class-III pyridoxal-phosphate-dependent aminotransferase family. HemL subfamily. Homodimer. Pyridoxal 5'-phosphate serves as cofactor.

Its subcellular location is the cytoplasm. The catalysed reaction is (S)-4-amino-5-oxopentanoate = 5-aminolevulinate. It participates in porphyrin-containing compound metabolism; protoporphyrin-IX biosynthesis; 5-aminolevulinate from L-glutamyl-tRNA(Glu): step 2/2. This chain is Glutamate-1-semialdehyde 2,1-aminomutase, found in Methylacidiphilum infernorum (isolate V4) (Methylokorus infernorum (strain V4)).